The chain runs to 438 residues: 23S rRNA (uracil(1939)-C(5))-methyltransferase RlmD (438 aa).

In terms of domain architecture, TRAM spans 9 to 68; that stretch reads RRTVNRHIITVTADNLDAQGQGVARHQGKTIFVAGLLPGEQAQVQLTEEKRQFAKAKLVK. Residues cysteine 81, cysteine 87, cysteine 90, and cysteine 168 each contribute to the [4Fe-4S] cluster site. The S-adenosyl-L-methionine site is built by glutamine 272, phenylalanine 301, asparagine 306, glutamate 322, asparagine 349, and aspartate 370. Cysteine 396 serves as the catalytic Nucleophile.

Belongs to the class I-like SAM-binding methyltransferase superfamily. RNA M5U methyltransferase family. RlmD subfamily.

It catalyses the reaction uridine(1939) in 23S rRNA + S-adenosyl-L-methionine = 5-methyluridine(1939) in 23S rRNA + S-adenosyl-L-homocysteine + H(+). In terms of biological role, catalyzes the formation of 5-methyl-uridine at position 1939 (m5U1939) in 23S rRNA. The protein is 23S rRNA (uracil(1939)-C(5))-methyltransferase RlmD of Photorhabdus laumondii subsp. laumondii (strain DSM 15139 / CIP 105565 / TT01) (Photorhabdus luminescens subsp. laumondii).